The chain runs to 70 residues: Small ribosomal subunit protein bS21C (70 aa).

It belongs to the bacterial ribosomal protein bS21 family.

This is Small ribosomal subunit protein bS21C from Burkholderia pseudomallei (strain 1710b).